Here is a 277-residue protein sequence, read N- to C-terminus: Ribonuclease HII (277 aa).

The RNase H type-2 domain maps to 72-260; the sequence is EYIAGIDEAG…IKEMIEMKKE (189 aa). Asp-78, Glu-79, and Asp-170 together coordinate a divalent metal cation.

The protein belongs to the RNase HII family. Requires Mn(2+) as cofactor. It depends on Mg(2+) as a cofactor.

It localises to the cytoplasm. The catalysed reaction is Endonucleolytic cleavage to 5'-phosphomonoester.. Endonuclease that specifically degrades the RNA of RNA-DNA hybrids. This is Ribonuclease HII from Geobacillus sp. (strain WCH70).